A 281-amino-acid polypeptide reads, in one-letter code: Diaminopimelate epimerase (281 aa).

N13 and N66 together coordinate substrate. C75 (proton donor) is an active-site residue. Substrate is bound by residues 76–77 (GN), N164, N197, and 215–216 (ER). C224 acts as the Proton acceptor in catalysis. 225–226 (GT) contributes to the substrate binding site.

Belongs to the diaminopimelate epimerase family. Homodimer.

It localises to the cytoplasm. The catalysed reaction is (2S,6S)-2,6-diaminopimelate = meso-2,6-diaminopimelate. It participates in amino-acid biosynthesis; L-lysine biosynthesis via DAP pathway; DL-2,6-diaminopimelate from LL-2,6-diaminopimelate: step 1/1. Its function is as follows. Catalyzes the stereoinversion of LL-2,6-diaminopimelate (L,L-DAP) to meso-diaminopimelate (meso-DAP), a precursor of L-lysine and an essential component of the bacterial peptidoglycan. This chain is Diaminopimelate epimerase, found in Gloeothece citriformis (strain PCC 7424) (Cyanothece sp. (strain PCC 7424)).